A 156-amino-acid chain; its full sequence is Phosphopantetheine adenylyltransferase (156 aa).

Threonine 9 serves as a coordination point for substrate. ATP is bound by residues 9-10 (TF) and histidine 17. Substrate is bound by residues lysine 41, leucine 73, and arginine 87. ATP is bound by residues 88-90 (GVR), glutamate 98, and 123-129 (WAFVSST).

This sequence belongs to the bacterial CoaD family. As to quaternary structure, homohexamer. Mg(2+) is required as a cofactor.

It is found in the cytoplasm. It catalyses the reaction (R)-4'-phosphopantetheine + ATP + H(+) = 3'-dephospho-CoA + diphosphate. It participates in cofactor biosynthesis; coenzyme A biosynthesis; CoA from (R)-pantothenate: step 4/5. Its function is as follows. Reversibly transfers an adenylyl group from ATP to 4'-phosphopantetheine, yielding dephospho-CoA (dPCoA) and pyrophosphate. The sequence is that of Phosphopantetheine adenylyltransferase from Haemophilus influenzae (strain ATCC 51907 / DSM 11121 / KW20 / Rd).